The sequence spans 187 residues: Ribosome-recycling factor (187 aa).

Belongs to the RRF family.

Its subcellular location is the cytoplasm. Responsible for the release of ribosomes from messenger RNA at the termination of protein biosynthesis. May increase the efficiency of translation by recycling ribosomes from one round of translation to another. The protein is Ribosome-recycling factor of Petrotoga mobilis (strain DSM 10674 / SJ95).